Here is a 564-residue protein sequence, read N- to C-terminus: Phenylalanine--tRNA ligase beta subunit (564 aa).

Residues 286–362 (YFQNMLEVNV…IGMGLDSFKP (77 aa)) form the B5 domain. Positions 340, 346, 349, and 350 each coordinate Mg(2+).

The protein belongs to the phenylalanyl-tRNA synthetase beta subunit family. Type 2 subfamily. Tetramer of two alpha and two beta subunits. Requires Mg(2+) as cofactor.

It is found in the cytoplasm. It carries out the reaction tRNA(Phe) + L-phenylalanine + ATP = L-phenylalanyl-tRNA(Phe) + AMP + diphosphate + H(+). This is Phenylalanine--tRNA ligase beta subunit from Borrelia turicatae (strain 91E135).